Reading from the N-terminus, the 157-residue chain is Ribonuclease 8 (157 aa).

Residues 1 to 30 (MAPARAGCCPLLLLLLLLLGLWVAEVLVSA) form the signal peptide. The active-site Proton acceptor is the His45. Intrachain disulfides connect Cys53–Cys96, Cys67–Cys121, Cys85–Cys136, and Cys92–Cys99. Residues 68–72 (KDLNT) and Lys93 contribute to the substrate site. Catalysis depends on His152, which acts as the Proton donor.

This sequence belongs to the pancreatic ribonuclease family.

Its subcellular location is the secreted. Its function is as follows. Has a low ribonuclease activity. This Pan troglodytes (Chimpanzee) protein is Ribonuclease 8 (RNASE8).